A 204-amino-acid chain; its full sequence is Holliday junction branch migration complex subunit RuvA (204 aa).

The interval 1-64 (MIARLRGTLL…EDGQTLFGFR (64 aa)) is domain I. A domain II region spans residues 65–143 (TRAERDLFRR…GVGGGSTAAP (79 aa)). Residues 144–153 (AAGADHPTGE) form a flexible linker region. A domain III region spans residues 153–204 (ENDPVSEAIEGLVALGYKPPEAARMARNAAEPELGCEAIIRRALQRAVPRGG).

It belongs to the RuvA family. In terms of assembly, homotetramer. Forms an RuvA(8)-RuvB(12)-Holliday junction (HJ) complex. HJ DNA is sandwiched between 2 RuvA tetramers; dsDNA enters through RuvA and exits via RuvB. An RuvB hexamer assembles on each DNA strand where it exits the tetramer. Each RuvB hexamer is contacted by two RuvA subunits (via domain III) on 2 adjacent RuvB subunits; this complex drives branch migration. In the full resolvosome a probable DNA-RuvA(4)-RuvB(12)-RuvC(2) complex forms which resolves the HJ.

Its subcellular location is the cytoplasm. In terms of biological role, the RuvA-RuvB-RuvC complex processes Holliday junction (HJ) DNA during genetic recombination and DNA repair, while the RuvA-RuvB complex plays an important role in the rescue of blocked DNA replication forks via replication fork reversal (RFR). RuvA specifically binds to HJ cruciform DNA, conferring on it an open structure. The RuvB hexamer acts as an ATP-dependent pump, pulling dsDNA into and through the RuvAB complex. HJ branch migration allows RuvC to scan DNA until it finds its consensus sequence, where it cleaves and resolves the cruciform DNA. The protein is Holliday junction branch migration complex subunit RuvA of Halorhodospira halophila (strain DSM 244 / SL1) (Ectothiorhodospira halophila (strain DSM 244 / SL1)).